Reading from the N-terminus, the 673-residue chain is MNDQGIKESIETLKEQIRKYDYHYYVLDEPLVPDAEYDRCFKALQQYEEQYPQFLSPDSPTQRVSGTPSDAFMPVAHKQPMLSLSNVFTTDELKAFIKRAIEKLDEPNQQLVFACEPKLDGLAVNMTYEGGILTHAATRGDGAVGENITANIKTIASVPLRLRVSNPPKLIEVRGEVYIPKADFEAYNARARELGEKTFANPRNAAAGSLRQLNPEISASRPLAIYCYGIGACEDYKLPNSHLEQLNLLKEFGFRVSPETRRAVGVEGCLDYYQYMLAKRNQLPFEIDGVVYKIDSISLQQQLGYVSRAPRFACAHKFPATEEMTRLIAVDFQVGRTGAVTPVARLEPVSVGGVTVSNATLHNFDEITRKDIRIGDTVIIRRAGDVIPEVVSVILEKRPANARMIELPKNCPVCGSEVVREADEAIARCVGGLYCKAQLKRMMWHFASRKAMYIEGLGSVLIDQLVDEGIVHHLADLYELDLQTLANLPRMGEKSAKNLLSALEKSKKTTFNRFLYALGIREIGEAGARVLAEHYCDVESLKAATIEELMTLNDIGPVAASHIVHFFAQAHNLEVIDRLLELGIHWPKPEKIQVNQQNPFFGKTVVLTGTLSTMGREEAKAKLLALGAKVSGSVSSKTDYVVAGSEAGSKLIKATELGVAIIEEDEFLKWVNS.

NAD(+) contacts are provided by residues 34 to 38 (DAEYD), 83 to 84 (SL), and Glu-116. Residue Lys-118 is the N6-AMP-lysine intermediate of the active site. Positions 139, 176, 293, and 317 each coordinate NAD(+). 4 residues coordinate Zn(2+): Cys-411, Cys-414, Cys-429, and Cys-435. The region spanning 595–673 (NQQNPFFGKT…EDEFLKWVNS (79 aa)) is the BRCT domain.

Belongs to the NAD-dependent DNA ligase family. LigA subfamily. Requires Mg(2+) as cofactor. Mn(2+) serves as cofactor.

It carries out the reaction NAD(+) + (deoxyribonucleotide)n-3'-hydroxyl + 5'-phospho-(deoxyribonucleotide)m = (deoxyribonucleotide)n+m + AMP + beta-nicotinamide D-nucleotide.. Its function is as follows. DNA ligase that catalyzes the formation of phosphodiester linkages between 5'-phosphoryl and 3'-hydroxyl groups in double-stranded DNA using NAD as a coenzyme and as the energy source for the reaction. It is essential for DNA replication and repair of damaged DNA. This is DNA ligase from Legionella pneumophila subsp. pneumophila (strain Philadelphia 1 / ATCC 33152 / DSM 7513).